Reading from the N-terminus, the 217-residue chain is Probable transaldolase (217 aa).

Lysine 83 acts as the Schiff-base intermediate with substrate in catalysis.

This sequence belongs to the transaldolase family. Type 3B subfamily.

It is found in the cytoplasm. It carries out the reaction D-sedoheptulose 7-phosphate + D-glyceraldehyde 3-phosphate = D-erythrose 4-phosphate + beta-D-fructose 6-phosphate. It functions in the pathway carbohydrate degradation; pentose phosphate pathway; D-glyceraldehyde 3-phosphate and beta-D-fructose 6-phosphate from D-ribose 5-phosphate and D-xylulose 5-phosphate (non-oxidative stage): step 2/3. Functionally, transaldolase is important for the balance of metabolites in the pentose-phosphate pathway. This is Probable transaldolase from Brucella melitensis biotype 1 (strain ATCC 23456 / CCUG 17765 / NCTC 10094 / 16M).